The sequence spans 92 residues: Small ribosomal subunit protein uS19 (92 aa).

This sequence belongs to the universal ribosomal protein uS19 family.

Functionally, protein S19 forms a complex with S13 that binds strongly to the 16S ribosomal RNA. The protein is Small ribosomal subunit protein uS19 of Corynebacterium kroppenstedtii (strain DSM 44385 / JCM 11950 / CIP 105744 / CCUG 35717).